A 235-amino-acid chain; its full sequence is Large ribosomal subunit protein uL1 (235 aa).

Belongs to the universal ribosomal protein uL1 family. In terms of assembly, part of the 50S ribosomal subunit.

Functionally, binds directly to 23S rRNA. The L1 stalk is quite mobile in the ribosome, and is involved in E site tRNA release. Protein L1 is also a translational repressor protein, it controls the translation of the L11 operon by binding to its mRNA. The polypeptide is Large ribosomal subunit protein uL1 (Mycolicibacterium paratuberculosis (strain ATCC BAA-968 / K-10) (Mycobacterium paratuberculosis)).